Consider the following 560-residue polypeptide: Putative transport protein VS_1837 (560 aa).

The next 5 helical transmembrane spans lie at 5–25 (VVLL…SIGL), 37–57 (LGNS…GFSF), 66–86 (FMLF…GIFF), 91–111 (HYLI…YFCS), and 155–175 (LGLV…VGLI). 2 RCK C-terminal domains span residues 203-292 (RGLG…FRNG) and 293-376 (KEVF…KIGF). 6 consecutive transmembrane segments (helical) span residues 386 to 406 (LTAF…TMTF), 409 to 429 (VSFG…LGFL), 450 to 470 (LGLM…IFEH), 478 to 498 (VIGI…LVGA), 506 to 526 (ALLF…DIVN), and 539 to 559 (AGTY…IIII).

The protein belongs to the AAE transporter (TC 2.A.81) family. YbjL subfamily.

The protein resides in the cell membrane. The sequence is that of Putative transport protein VS_1837 from Vibrio atlanticus (strain LGP32) (Vibrio splendidus (strain Mel32)).